The primary structure comprises 433 residues: 4-hydroxy-3-methylbut-2-en-1-yl diphosphate synthase (flavodoxin) (433 aa).

Residues 1–13 are compositionally biased toward polar residues; it reads MNKPETVTENSLA. A disordered region spans residues 1-23; that stretch reads MNKPETVTENSLASDVAGPAPRH. [4Fe-4S] cluster is bound by residues cysteine 314, cysteine 317, cysteine 360, and glutamate 367.

It belongs to the IspG family. [4Fe-4S] cluster is required as a cofactor.

It catalyses the reaction (2E)-4-hydroxy-3-methylbut-2-enyl diphosphate + oxidized [flavodoxin] + H2O + 2 H(+) = 2-C-methyl-D-erythritol 2,4-cyclic diphosphate + reduced [flavodoxin]. It functions in the pathway isoprenoid biosynthesis; isopentenyl diphosphate biosynthesis via DXP pathway; isopentenyl diphosphate from 1-deoxy-D-xylulose 5-phosphate: step 5/6. In terms of biological role, converts 2C-methyl-D-erythritol 2,4-cyclodiphosphate (ME-2,4cPP) into 1-hydroxy-2-methyl-2-(E)-butenyl 4-diphosphate. The sequence is that of 4-hydroxy-3-methylbut-2-en-1-yl diphosphate synthase (flavodoxin) from Bradyrhizobium sp. (strain ORS 278).